The primary structure comprises 211 residues: Octanoyltransferase (211 aa).

Residues 32–211 (DHEPEIIYLV…IQTEFNKIFK (180 aa)) enclose the BPL/LPL catalytic domain. Substrate-binding positions include 71 to 78 (RGGKFTFH), 145 to 147 (AIG), and 158 to 160 (GVA). The active-site Acyl-thioester intermediate is the cysteine 176.

This sequence belongs to the LipB family.

It localises to the cytoplasm. It catalyses the reaction octanoyl-[ACP] + L-lysyl-[protein] = N(6)-octanoyl-L-lysyl-[protein] + holo-[ACP] + H(+). It participates in protein modification; protein lipoylation via endogenous pathway; protein N(6)-(lipoyl)lysine from octanoyl-[acyl-carrier-protein]: step 1/2. In terms of biological role, catalyzes the transfer of endogenously produced octanoic acid from octanoyl-acyl-carrier-protein onto the lipoyl domains of lipoate-dependent enzymes. Lipoyl-ACP can also act as a substrate although octanoyl-ACP is likely to be the physiological substrate. The chain is Octanoyltransferase from Rickettsia massiliae (strain Mtu5).